The following is a 449-amino-acid chain: Transport protein ComB (449 aa).

At Met-1–Ser-20 the chain is on the cytoplasmic side. Residues Ser-21–Ala-41 form a helical membrane-spanning segment. Residues Glu-42 to Glu-449 are Extracellular-facing.

Belongs to the membrane fusion protein (MFP) (TC 8.A.1) family.

The protein resides in the cell membrane. Functionally, required for induction of competence. The protein is Transport protein ComB (comB) of Streptococcus pneumoniae (strain ATCC BAA-255 / R6).